A 453-amino-acid chain; its full sequence is Aspartic proteinase PCS1 (453 aa).

A signal peptide spans 1–18; that stretch reads MFSRFHALFLLLVLSVRT. The propeptide at 19 to 57 is activation peptide; that stretch reads YKCVSSSSSSSSSFSFSSFSSSSSSQTLVLPLKTRITPT. Asparagine 70 and asparagine 85 each carry an N-linked (GlcNAc...) asparagine glycan. Residues 73 to 438 enclose the Peptidase A1 domain; it reads LTVTLTVGTP…DLQRSRIGLA (366 aa). Residue aspartate 91 is part of the active site. N-linked (GlcNAc...) asparagine glycans are attached at residues asparagine 102, asparagine 175, asparagine 178, and asparagine 243. Residue aspartate 304 is part of the active site. N-linked (GlcNAc...) asparagine glycans are attached at residues asparagine 326 and asparagine 395.

It belongs to the peptidase A1 family. As to expression, expressed specifically in developing gametophytes and developing seeds.

The protein localises to the endoplasmic reticulum. Functionally, embryo-specific aspartic protease that limits programmed cell death during reproductive development. Possesses peptidase activity toward casein in vitro. The chain is Aspartic proteinase PCS1 (PCS1) from Arabidopsis thaliana (Mouse-ear cress).